The following is a 396-amino-acid chain: Coiled-coil domain-containing protein 1 (396 aa).

An N-terminal signal peptide occupies residues 1-21 (MAARSALCFLAIITLFVYACG). Coiled-coil stretches lie at residues 53-73 (KIDS…NDRD), 109-129 (EVEK…DIID), 208-242 (DKES…ILDT), and 287-308 (YEEI…IDEH). Residues 231–256 (DANDDVNDILDTDDEDEDEDVQEEKD) show a composition bias toward acidic residues. 2 disordered regions span residues 231–260 (DAND…EDIH) and 288–378 (EEIE…VADD).

As to expression, component of the acid-insoluble and acid-soluble organic matrix of calcified layers of the shell (at protein level).

The protein localises to the secreted. The chain is Coiled-coil domain-containing protein 1 from Lottia gigantea (Giant owl limpet).